The chain runs to 270 residues: Homeobox protein vent1B (270 aa).

2 stretches are compositionally biased toward basic and acidic residues: residues 17–26 and 44–59; these read EEAADGKDSM and YAKE…DVQE. Disordered stretches follow at residues 17 to 66 and 88 to 134; these read EEAA…SFQC and TWGS…LRTA. Residues 89–99 are compositionally biased toward polar residues; it reads WGSSDEFSSAG. Basic and acidic residues predominate over residues 116 to 131; sequence QDTDHNGKSTKSDRRL. Residues 128 to 187 constitute a DNA-binding region (homeobox); sequence DRRLRTAFSPQQISKLEQAFNKQRYLGASERKKLATSLMLSEIQVKTWFQNRRMKLKRQI.

Expressed in the ventral marginal zone of gastrulae. At the end of gastrulation, predominantly localized to the ventral region of the closing slit blastopore. At early tail bud stage, expression is maintained only in the forming proctodeum.

It is found in the nucleus. Its function is as follows. Probable transcription regulator. Acts in a ventral signaling pathway downstream of bmp4 and vent2B. In Xenopus laevis (African clawed frog), this protein is Homeobox protein vent1B (vent1B).